Reading from the N-terminus, the 503-residue chain is Lysine--tRNA ligase (503 aa).

Residues Glu414 and Glu421 each coordinate Mg(2+).

This sequence belongs to the class-II aminoacyl-tRNA synthetase family. Homodimer. Requires Mg(2+) as cofactor.

It localises to the cytoplasm. It carries out the reaction tRNA(Lys) + L-lysine + ATP = L-lysyl-tRNA(Lys) + AMP + diphosphate. This is Lysine--tRNA ligase from Neisseria meningitidis serogroup A / serotype 4A (strain DSM 15465 / Z2491).